The sequence spans 126 residues: Small ribosomal subunit protein uS12c (126 aa).

The protein belongs to the universal ribosomal protein uS12 family. In terms of assembly, part of the 30S ribosomal subunit.

The protein resides in the plastid. It localises to the chloroplast. Functionally, with S4 and S5 plays an important role in translational accuracy. Located at the interface of the 30S and 50S subunits. This chain is Small ribosomal subunit protein uS12c (rps12), found in Trieres chinensis (Marine centric diatom).